The following is a 463-amino-acid chain: MVEKRKIFTVLCACGIGFTSYTSCISAAAIDNDTLINNGHKINSSIITNSSQVSAVAKEMKPFPQQVNYSGILKPNHVSQESLNNAVKNYYNDWKKKYLKNDLSSLPGGYYVKGEITGNPDGFRPLGTSEGQGYGMIITVLMAGHDSNAQTIYDGLFKTARAFKSSINPNLMGWVVADDKKAQGHFDSATDGDLDIAYSLLLAHKQWGSSGKINYLKEAQNMITKGIKASNVTKNNGLNLGDWGDKSTFDTRPSDWMMSHLRAFYEFTGDKTWLNVIDNLYNTYTNFTNKYSPKTGLISDFVVKNPPQPAPKDFLDESKYTDSYYYNASRVPLRIVMDYAMYGEKRGKVISDKVATWIKSKTKGNPSKIVDGYKLDGTNIGDYPTAVYVSPFIAAGTTNSKNQEWVNSGWDWMKNKKESYFSDSYNLLTMLFLTGNWWKPIPDEKKIQSPINLEVQSELKEQD.

An N-terminal signal peptide occupies residues 1–27 (MVEKRKIFTVLCACGIGFTSYTSCISA). The propeptide occupies 28 to 55 (AAIDNDTLINNGHKINSSIITNSSQVSA). The active-site Proton donor is the Glu-130. Asp-191 serves as the catalytic Nucleophile.

This sequence belongs to the glycosyl hydrolase 8 (cellulase D) family. In terms of processing, the N- and the C-terminus may be subjected to proteolysis.

The catalysed reaction is Endohydrolysis of (1-&gt;4)-beta-D-glucosidic linkages in cellulose, lichenin and cereal beta-D-glucans.. This is Endoglucanase from Bacillus sp. (strain KSM-330).